The primary structure comprises 384 residues: tRNA(Met) cytidine acetate ligase (384 aa).

ATP contacts are provided by residues 7–20, Gly101, Asn153, and Arg178; that span reads VAEYNPFHSGHEFL.

It belongs to the TmcAL family.

The protein resides in the cytoplasm. The enzyme catalyses cytidine(34) in elongator tRNA(Met) + acetate + ATP = N(4)-acetylcytidine(34) in elongator tRNA(Met) + AMP + diphosphate. In terms of biological role, catalyzes the formation of N(4)-acetylcytidine (ac(4)C) at the wobble position of elongator tRNA(Met), using acetate and ATP as substrates. First activates an acetate ion to form acetyladenylate (Ac-AMP) and then transfers the acetyl group to tRNA to form ac(4)C34. In Lactobacillus delbrueckii subsp. bulgaricus (strain ATCC BAA-365 / Lb-18), this protein is tRNA(Met) cytidine acetate ligase.